The primary structure comprises 664 residues: DNA ligase (664 aa).

Residues 32–36 (DKEYD) and 80–81 (SL) each bind NAD(+). The N6-AMP-lysine intermediate role is filled by Lys-122. NAD(+) contacts are provided by Arg-144, Glu-178, and Lys-314. The Zn(2+) site is built by Cys-407, Cys-410, Cys-423, and Cys-429. The region spanning 587 to 664 (IDENPFMDKT…NEEEFSNKIK (78 aa)) is the BRCT domain.

The protein belongs to the NAD-dependent DNA ligase family. LigA subfamily. Mg(2+) is required as a cofactor. The cofactor is Mn(2+).

It carries out the reaction NAD(+) + (deoxyribonucleotide)n-3'-hydroxyl + 5'-phospho-(deoxyribonucleotide)m = (deoxyribonucleotide)n+m + AMP + beta-nicotinamide D-nucleotide.. DNA ligase that catalyzes the formation of phosphodiester linkages between 5'-phosphoryl and 3'-hydroxyl groups in double-stranded DNA using NAD as a coenzyme and as the energy source for the reaction. It is essential for DNA replication and repair of damaged DNA. The chain is DNA ligase from Clostridium botulinum (strain Loch Maree / Type A3).